We begin with the raw amino-acid sequence, 268 residues long: tRNA (guanine-N(1)-)-methyltransferase (268 aa).

S-adenosyl-L-methionine-binding positions include G110 and 129–134 (IGDFVM). Residues 246–268 (WGAPPAPVKRHRKRRPETTESAS) form a disordered region.

Belongs to the RNA methyltransferase TrmD family. In terms of assembly, homodimer.

It localises to the cytoplasm. It carries out the reaction guanosine(37) in tRNA + S-adenosyl-L-methionine = N(1)-methylguanosine(37) in tRNA + S-adenosyl-L-homocysteine + H(+). Specifically methylates guanosine-37 in various tRNAs. This Deinococcus deserti (strain DSM 17065 / CIP 109153 / LMG 22923 / VCD115) protein is tRNA (guanine-N(1)-)-methyltransferase.